We begin with the raw amino-acid sequence, 49 residues long: Large ribosomal subunit protein bL33 (49 aa).

This sequence belongs to the bacterial ribosomal protein bL33 family.

The protein is Large ribosomal subunit protein bL33 of Streptococcus gordonii (strain Challis / ATCC 35105 / BCRC 15272 / CH1 / DL1 / V288).